A 376-amino-acid polypeptide reads, in one-letter code: Probable sister chromatid cohesion protein DCC1 (376 aa).

The interval 213-232 is disordered; the sequence is QKSPTNSGGGGEEIKGGGGD. A compositionally biased stretch (gly residues) spans 219 to 232; sequence SGGGGEEIKGGGGD.

Belongs to the DCC1 family.

The protein localises to the nucleus. In terms of biological role, loads PCNA onto primed templates regulating velocity, spacing and restart activity of replication forks. May couple DNA replication to sister chromatid cohesion. The sequence is that of Probable sister chromatid cohesion protein DCC1 from Dictyostelium discoideum (Social amoeba).